The primary structure comprises 397 residues: Growth-regulating factor 1 (397 aa).

Residues 18–53 (PFTASQWQELEHQALIYKYMASGTPIPSDLILPLRR) form the QLQ domain. Short sequence motifs (bipartite nuclear localization signal) lie at residues 86 to 105 (RKAE…KKWR) and 123 to 130 (RGKNRSRK). The WRC domain maps to 90–134 (DPEPGRCRRTDGKKWRCSKEAYPDSKYCEKHMHRGKNRSRKPVEM). The tract at residues 117–176 (CEKHMHRGKNRSRKPVEMSLATPPPPSSSATSAASNTSAGVAPTTTTTSSPAPSYSRPAP) is disordered. Over residues 120-129 (HMHRGKNRSR) the composition is skewed to basic residues. Positions 144 to 174 (SSATSAASNTSAGVAPTTTTTSSPAPSYSRP) are enriched in low complexity.

Belongs to the GRF family.

The protein localises to the nucleus. Its function is as follows. Transcription activator that plays a regulatory role in gibberellin-induced stem elongation. The polypeptide is Growth-regulating factor 1 (GRF1) (Oryza sativa subsp. japonica (Rice)).